Consider the following 514-residue polypeptide: 2,3-bisphosphoglycerate-independent phosphoglycerate mutase (514 aa).

Mn(2+) contacts are provided by aspartate 14 and serine 64. Residue serine 64 is the Phosphoserine intermediate of the active site. Substrate contacts are provided by residues histidine 125, 155–156 (RD), arginine 187, arginine 193, 263–266 (RADR), and lysine 336. Residues aspartate 403, histidine 407, aspartate 444, histidine 445, and histidine 463 each coordinate Mn(2+).

Belongs to the BPG-independent phosphoglycerate mutase family. As to quaternary structure, monomer. Requires Mn(2+) as cofactor.

The enzyme catalyses (2R)-2-phosphoglycerate = (2R)-3-phosphoglycerate. It functions in the pathway carbohydrate degradation; glycolysis; pyruvate from D-glyceraldehyde 3-phosphate: step 3/5. Its function is as follows. Catalyzes the interconversion of 2-phosphoglycerate and 3-phosphoglycerate. This is 2,3-bisphosphoglycerate-independent phosphoglycerate mutase from Escherichia coli O1:K1 / APEC.